The sequence spans 602 residues: Elongation factor 4 (602 aa).

Residues 6-188 (DHIRNFSIVA…AIVNKLPAPK (183 aa)) enclose the tr-type G domain. Residues 18 to 23 (DHGKST) and 135 to 138 (NKID) each bind GTP.

This sequence belongs to the TRAFAC class translation factor GTPase superfamily. Classic translation factor GTPase family. LepA subfamily.

Its subcellular location is the cell inner membrane. It catalyses the reaction GTP + H2O = GDP + phosphate + H(+). In terms of biological role, required for accurate and efficient protein synthesis under certain stress conditions. May act as a fidelity factor of the translation reaction, by catalyzing a one-codon backward translocation of tRNAs on improperly translocated ribosomes. Back-translocation proceeds from a post-translocation (POST) complex to a pre-translocation (PRE) complex, thus giving elongation factor G a second chance to translocate the tRNAs correctly. Binds to ribosomes in a GTP-dependent manner. The chain is Elongation factor 4 from Brucella melitensis biotype 2 (strain ATCC 23457).